A 375-amino-acid polypeptide reads, in one-letter code: MTCPVIELAQQLIKRPSLSPHDEGCQALMIERLEAIGFTVEPMPFGDTLNFWAWRGEGQTLAFAGHTDVVPTGDEKRWDNPPFEPTIRDGMLYGRGAADMKGSLAAMVVAAERFVAANPHHQGRLAFLITSDEEASATHGTVKVVEALMARNERLDYCLVGEPSSTERVGDVVKNGRRGSITANLHIHGIQGHVAYPHLADNPVHRAMPALNELVAIEWDRGNEFFPPTSMQIANVQAGTGSNNVIPGEMFVQFNFRFSTESTDATIKQRVEELLERHQLNYSIEWRLSGQPFLTARGALVDAVVNAVEHYSELTPQLLTTGGTSDGRFIAQMGAQVVELGPVNATIHKVNECVHAADLQLLSRMYQRIMEQLVA.

H66 serves as a coordination point for Zn(2+). The active site involves D68. D99 contacts Zn(2+). E133 acts as the Proton acceptor in catalysis. Residues E134, E162, and H348 each coordinate Zn(2+).

The protein belongs to the peptidase M20A family. DapE subfamily. Homodimer. It depends on Zn(2+) as a cofactor. The cofactor is Co(2+).

The catalysed reaction is N-succinyl-(2S,6S)-2,6-diaminopimelate + H2O = (2S,6S)-2,6-diaminopimelate + succinate. It participates in amino-acid biosynthesis; L-lysine biosynthesis via DAP pathway; LL-2,6-diaminopimelate from (S)-tetrahydrodipicolinate (succinylase route): step 3/3. In terms of biological role, catalyzes the hydrolysis of N-succinyl-L,L-diaminopimelic acid (SDAP), forming succinate and LL-2,6-diaminopimelate (DAP), an intermediate involved in the bacterial biosynthesis of lysine and meso-diaminopimelic acid, an essential component of bacterial cell walls. This chain is Succinyl-diaminopimelate desuccinylase, found in Serratia proteamaculans (strain 568).